We begin with the raw amino-acid sequence, 146 residues long: Flavodoxin (146 aa).

Residues 4–143 (ALIVYGSTTG…EVLDWAREVL (140 aa)) form the Flavodoxin-like domain.

This sequence belongs to the flavodoxin family. It depends on FMN as a cofactor.

Its function is as follows. Electron-transfer proteins that function in various electron transport systems in microorganisms. Functionally interchangeable with ferredoxin. This is Flavodoxin from Megalodesulfovibrio gigas (strain ATCC 19364 / DSM 1382 / NCIMB 9332 / VKM B-1759) (Desulfovibrio gigas).